The primary structure comprises 68 residues: MGMRMMFIMFMLVVLATTVVTFTSDRALDAMNAAASNKASRLIALAVRGCCARAACAGIHQELCGGGR.

Residues 1-21 form the signal peptide; sequence MGMRMMFIMFMLVVLATTVVT. The propeptide occupies 22–48; the sequence is FTSDRALDAMNAAASNKASRLIALAVR. Intrachain disulfides connect Cys-50/Cys-56 and Cys-51/Cys-64. Residues 52–54 form a lacks the Ser-Xaa-Pro motif that is crucial for potent interaction with nAChR region; that stretch reads ARA. Gly-65 carries the post-translational modification Glycine amide. The propeptide occupies 66 to 68; it reads GGR.

Belongs to the conotoxin A superfamily. In terms of tissue distribution, expressed by the venom duct.

The protein resides in the secreted. Its function is as follows. Alpha-conotoxins act on postsynaptic membranes, they bind to the nicotinic acetylcholine receptors (nAChR) and thus inhibit them. Synthetic peptide inhibits alpha-6/alpha-3/beta-2 and alpha-3/beta-2 nicotinic acetylcholine receptors and causes uncoordinated movement when intramuscularly injected into goldfish. Has a distinct nAChR binding mode from other alpha-conotoxins, due to a different three residue motif (Ala-Xaa-Ala instead of the conserved Ser-Xaa-Pro motif). The sequence is that of Alpha-conotoxin Lp1.1 from Conus leopardus (Leopard cone).